A 144-amino-acid chain; its full sequence is Deoxyuridine 5'-triphosphate nucleotidohydrolase (144 aa).

Residues 63-65, Asn-76, and 80-82 each bind substrate; these read RSG and TID.

Belongs to the dUTPase family. Mg(2+) serves as cofactor.

The enzyme catalyses dUTP + H2O = dUMP + diphosphate + H(+). Its pathway is pyrimidine metabolism; dUMP biosynthesis; dUMP from dCTP (dUTP route): step 2/2. In terms of biological role, this enzyme is involved in nucleotide metabolism: it produces dUMP, the immediate precursor of thymidine nucleotides and it decreases the intracellular concentration of dUTP so that uracil cannot be incorporated into DNA. The protein is Deoxyuridine 5'-triphosphate nucleotidohydrolase of Alkaliphilus metalliredigens (strain QYMF).